Consider the following 205-residue polypeptide: Adenylyl-sulfate kinase (205 aa).

31–38 contributes to the ATP binding site; it reads GLSGSGKS. Catalysis depends on serine 105, which acts as the Phosphoserine intermediate.

The protein belongs to the APS kinase family.

It catalyses the reaction adenosine 5'-phosphosulfate + ATP = 3'-phosphoadenylyl sulfate + ADP + H(+). It participates in sulfur metabolism; hydrogen sulfide biosynthesis; sulfite from sulfate: step 2/3. Functionally, catalyzes the synthesis of activated sulfate. The chain is Adenylyl-sulfate kinase from Shewanella halifaxensis (strain HAW-EB4).